Consider the following 613-residue polypeptide: DNA repair and telomere maintenance protein nbs1 (613 aa).

The region spanning 23–86 is the FHA domain; the sequence is YIVGRNVSDD…FGTKVNEKVV (64 aa). 2 consecutive BRCT domains span residues 107-186 and 228-302; these read FTIN…YLST and GFSC…KIII. Residue S355 is modified to Phosphoserine. Disordered stretches follow at residues 381 to 428 and 546 to 613; these read KEPE…GQGK and TEVF…KFHF. Residues 387 to 399 show a composition bias toward polar residues; it reads LSNQSNNGSAQNK. Residues 400–409 are compositionally biased toward basic and acidic residues; it reads KSGDNSEKTK. Residues 574-592 show a composition bias toward low complexity; sequence SSDKSGKSSISKKSSNSFK. The FxF/Y motif motif lies at 611–613; the sequence is FHF.

This sequence belongs to the Nibrin family. Component of the MRN complex composed of two heterodimers rad32 and rad50 associated with a single nbs1. Interacts with (phosphorylated) ctp1/CtIP. Interacts (via FxF/Y motif) with tel1/atm.

The protein resides in the nucleus. The protein localises to the chromosome. It localises to the telomere. Its function is as follows. Component of the MRN complex, which plays a central role in double-strand break (DSB) repair, DNA recombination, maintenance of telomere integrity and meiosis. The MRN complex is involved in the repair of DNA double-strand breaks (DSBs) via homologous recombination (HR), an error-free mechanism which primarily occurs during S and G2 phases. The complex (1) mediates the end resection of damaged DNA, which generates proper single-stranded DNA, a key initial steps in HR, and is (2) required for the recruitment of other repair factors and efficient activation of tel1/atm upon DNA damage. The MRN complex possesses single-strand endonuclease activity and double-strand-specific 3'-5' exonuclease activity, which are provided by MRE11, to initiate end resection, which is required for single-strand invasion and recombination. Within the MRN complex, nbs1 acts as a protein-protein adapter, which specifically recognizes and binds phosphorylated proteins, promoting their recruitment to DNA damage sites. Recruits rad32 and rad50 components of the MRN complex to DSBs in response to DNA damage. Promotes the recruitment of tel1/atm to the DNA damage sites, activating tel1/atm function. Mediates the recruitment of phosphorylated ctp1/CtIP to DSBs, leading to cooperation between the MRN complex and ctp1/CtIP to initiate end resection. The polypeptide is DNA repair and telomere maintenance protein nbs1 (Schizosaccharomyces pombe (strain 972 / ATCC 24843) (Fission yeast)).